Reading from the N-terminus, the 267-residue chain is NAD kinase 2 (267 aa).

D52 acts as the Proton acceptor in catalysis. Residues 52 to 53 (DG), 124 to 125 (NE), R151, D153, 164 to 169 (TAYNKS), and A188 contribute to the NAD(+) site.

Belongs to the NAD kinase family. The cofactor is a divalent metal cation.

The protein resides in the cytoplasm. It catalyses the reaction NAD(+) + ATP = ADP + NADP(+) + H(+). Involved in the regulation of the intracellular balance of NAD and NADP, and is a key enzyme in the biosynthesis of NADP. Catalyzes specifically the phosphorylation on 2'-hydroxyl of the adenosine moiety of NAD to yield NADP. The protein is NAD kinase 2 of Bacillus subtilis (strain 168).